A 182-amino-acid polypeptide reads, in one-letter code: UPF0397 protein BcerKBAB4_2500 (182 aa).

Helical transmembrane passes span 9–29 (VVAI…GFSI), 40–60 (AILT…IGLI), 71–91 (WGIW…MGLI), 114–134 (IAGL…DIIV), and 142–162 (IVIQ…VLGL).

It belongs to the UPF0397 family.

It localises to the cell membrane. In Bacillus mycoides (strain KBAB4) (Bacillus weihenstephanensis), this protein is UPF0397 protein BcerKBAB4_2500.